The primary structure comprises 428 residues: 3-phosphoshikimate 1-carboxyvinyltransferase (428 aa).

The 3-phosphoshikimate site is built by Lys-23, Ser-24, and Arg-28. Lys-23 is a binding site for phosphoenolpyruvate. Residues Gly-97 and Arg-125 each contribute to the phosphoenolpyruvate site. 3-phosphoshikimate-binding residues include Ser-170, Ser-171, Gln-172, Ser-198, Asp-314, Asn-338, and Lys-342. Gln-172 provides a ligand contact to phosphoenolpyruvate. The Proton acceptor role is filled by Asp-314. Arg-346, Arg-388, and Lys-413 together coordinate phosphoenolpyruvate.

Belongs to the EPSP synthase family. Monomer.

It is found in the cytoplasm. It carries out the reaction 3-phosphoshikimate + phosphoenolpyruvate = 5-O-(1-carboxyvinyl)-3-phosphoshikimate + phosphate. Its pathway is metabolic intermediate biosynthesis; chorismate biosynthesis; chorismate from D-erythrose 4-phosphate and phosphoenolpyruvate: step 6/7. Functionally, catalyzes the transfer of the enolpyruvyl moiety of phosphoenolpyruvate (PEP) to the 5-hydroxyl of shikimate-3-phosphate (S3P) to produce enolpyruvyl shikimate-3-phosphate and inorganic phosphate. The polypeptide is 3-phosphoshikimate 1-carboxyvinyltransferase (Baumannia cicadellinicola subsp. Homalodisca coagulata).